Consider the following 236-residue polypeptide: (5-formylfuran-3-yl)methyl phosphate synthase (236 aa).

The active-site Schiff-base intermediate with substrate is the lysine 27. Lysine 85 (proton acceptor) is an active-site residue.

The protein belongs to the MfnB family.

It carries out the reaction 2 D-glyceraldehyde 3-phosphate = 4-(hydroxymethyl)-2-furancarboxaldehyde phosphate + phosphate + 2 H2O. Its pathway is cofactor biosynthesis; methanofuran biosynthesis. Its function is as follows. Catalyzes the formation of 4-(hydroxymethyl)-2-furancarboxaldehyde phosphate (4-HFC-P) from two molecules of glyceraldehyde-3-P (GA-3-P). The chain is (5-formylfuran-3-yl)methyl phosphate synthase from Methanococcus maripaludis (strain C7 / ATCC BAA-1331).